A 649-amino-acid polypeptide reads, in one-letter code: Acid beta-fructofuranosidase (649 aa).

At 1-22 the chain is on the cytoplasmic side; that stretch reads MEHHKPLLPTSSHAAPTSSTRK. Positions 1-101 are cleaved as a propeptide — removed in mature form; it reads MEHHKPLLPT…NLLFAGEGGA (101 aa). The helical; Signal-anchor for type II membrane protein transmembrane segment at 23–43 threads the bilayer; that stretch reads DLLFVLCGLLFLSSLVAYGGY. Residues 44–649 lie on the Lumenal side of the membrane; sequence RASGVPHAHL…PFPFNPDQKS (606 aa). Residues 52-75 are disordered; that stretch reads HLSSPTSNHQQDHQSPTSLPSSKW. Positions 54–72 are enriched in polar residues; it reads SSPTSNHQQDHQSPTSLPS. Residues 127–130, Gln-146, Trp-154, and 189–190 contribute to the substrate site; these read WMND and WT. The active site involves Asp-130. Asn-210 carries an N-linked (GlcNAc...) (complex) asparagine glycan. 253-254 is a substrate binding site; sequence RD. Asn-275 carries an N-linked (GlcNAc...) (complex) asparagine glycan. Residues Glu-308 and Asp-341 each contribute to the substrate site. Cys-498 and Cys-546 are oxidised to a cystine. A glycan (N-linked (GlcNAc...) (high mannose) asparagine) is linked at Asn-618.

Belongs to the glycosyl hydrolase 32 family. In terms of assembly, present in two forms, a 70 kDa monomer and a heterodimer of the 30 kDa and 38 kDa subunits. The ratio of the levels of the two forms within cells appears to be regulated developmentally.

It localises to the membrane. The protein resides in the vacuole lumen. The catalysed reaction is Hydrolysis of terminal non-reducing beta-D-fructofuranoside residues in beta-D-fructofuranosides.. It functions in the pathway glycan biosynthesis; sucrose metabolism. Its function is as follows. Possible role in the continued mobilization of sucrose to sink organs. In Vigna radiata var. radiata (Mung bean), this protein is Acid beta-fructofuranosidase (INVA).